The chain runs to 72 residues: Large ribosomal subunit protein bL32 (72 aa).

This sequence belongs to the bacterial ribosomal protein bL32 family.

This is Large ribosomal subunit protein bL32 from Dehalococcoides mccartyi (strain ATCC BAA-2100 / JCM 16839 / KCTC 5957 / BAV1).